The chain runs to 214 residues: Ribonuclease HII (214 aa).

The RNase H type-2 domain occupies 26–214 (EIVCGVDEAG…PVRAALDLIR (189 aa)). A divalent metal cation-binding residues include aspartate 32, glutamate 33, and aspartate 124.

It belongs to the RNase HII family. Requires Mn(2+) as cofactor. Mg(2+) serves as cofactor.

Its subcellular location is the cytoplasm. It carries out the reaction Endonucleolytic cleavage to 5'-phosphomonoester.. In terms of biological role, endonuclease that specifically degrades the RNA of RNA-DNA hybrids. The polypeptide is Ribonuclease HII (Burkholderia orbicola (strain MC0-3)).